The primary structure comprises 87 residues: uncharacterized protein (87 aa).

Residues 4-87 (SIIEITNIKK…KPKGNITIKI (84 aa)) enclose the 2Fe-2S ferredoxin-type domain. Residues Cys-38, Cys-43, Cys-46, and Cys-75 each coordinate [2Fe-2S] cluster.

[2Fe-2S] cluster is required as a cofactor.

This is an uncharacterized protein from Buchnera aphidicola subsp. Acyrthosiphon pisum (strain APS) (Acyrthosiphon pisum symbiotic bacterium).